Consider the following 154-residue polypeptide: Ribosome maturation factor RimP (154 aa).

The protein belongs to the RimP family.

The protein localises to the cytoplasm. Functionally, required for maturation of 30S ribosomal subunits. This Desulforudis audaxviator (strain MP104C) protein is Ribosome maturation factor RimP.